The sequence spans 682 residues: Potassium-transporting ATPase ATP-binding subunit (682 aa).

A run of 4 helical transmembrane segments spans residues 34–54 (PVMFIVWIGSLLTTCISIAMA), 62–82 (ALFSAAISGWLWITVLFANFA), 219–239 (IALTILLIALTIVFLLATATL), and 254–274 (VLVALLVCLIPTTIGGLLSAI). D307 acts as the 4-aspartylphosphate intermediate in catalysis. ATP is bound by residues D344, E348, 377–384 (FTAQSRMS), and K395. Mg(2+) is bound by residues D518 and D522. 3 helical membrane-spanning segments follow: residues 588-608 (FAIIPAAFAATYPQLNALNIM), 616-636 (AILSAVIFNALIIVFLIPLAL), and 656-676 (IYGLGGLLVPFIGIKVIDLLL).

The protein belongs to the cation transport ATPase (P-type) (TC 3.A.3) family. Type IA subfamily. The system is composed of three essential subunits: KdpA, KdpB and KdpC.

The protein resides in the cell inner membrane. It catalyses the reaction K(+)(out) + ATP + H2O = K(+)(in) + ADP + phosphate + H(+). In terms of biological role, part of the high-affinity ATP-driven potassium transport (or Kdp) system, which catalyzes the hydrolysis of ATP coupled with the electrogenic transport of potassium into the cytoplasm. This subunit is responsible for energy coupling to the transport system and for the release of the potassium ions to the cytoplasm. The chain is Potassium-transporting ATPase ATP-binding subunit from Escherichia coli (strain K12 / MC4100 / BW2952).